A 494-amino-acid chain; its full sequence is UDP-N-acetylmuramoyl-L-alanyl-D-glutamate--L-lysine ligase (494 aa).

Residue serine 30 coordinates UDP-N-acetyl-alpha-D-muramoyl-L-alanyl-D-glutamate. 110–116 (GTNGKTS) serves as a coordination point for ATP. Residues 152–153 (TT), serine 179, and arginine 187 each bind UDP-N-acetyl-alpha-D-muramoyl-L-alanyl-D-glutamate. Lysine 219 bears the N6-carboxylysine mark. The L-lysine recognition motif signature appears at 406 to 409 (DNPA).

Belongs to the MurCDEF family. MurE subfamily. Post-translationally, carboxylation is probably crucial for Mg(2+) binding and, consequently, for the gamma-phosphate positioning of ATP.

It is found in the cytoplasm. The enzyme catalyses UDP-N-acetyl-alpha-D-muramoyl-L-alanyl-D-glutamate + L-lysine + ATP = UDP-N-acetyl-alpha-D-muramoyl-L-alanyl-gamma-D-glutamyl-L-lysine + ADP + phosphate + H(+). Its pathway is cell wall biogenesis; peptidoglycan biosynthesis. Catalyzes the addition of L-lysine to the nucleotide precursor UDP-N-acetylmuramoyl-L-alanyl-D-glutamate (UMAG) in the biosynthesis of bacterial cell-wall peptidoglycan. The sequence is that of UDP-N-acetylmuramoyl-L-alanyl-D-glutamate--L-lysine ligase from Staphylococcus epidermidis (strain ATCC 35984 / DSM 28319 / BCRC 17069 / CCUG 31568 / BM 3577 / RP62A).